Consider the following 579-residue polypeptide: Nuclear receptor coactivator 5 (579 aa).

Methionine 1 bears the N-acetylmethionine mark. The interval 1–78 (MNTAPSRPSP…LRDHRDSRSV (78 aa)) is disordered. Positions 1 to 158 (MNTAPSRPSP…RDSFDGRGPP (158 aa)) are transcription repression. Threonine 3 carries the post-translational modification Phosphothreonine. Phosphoserine occurs at positions 9, 21, 24, 29, and 34. Composition is skewed to basic and acidic residues over residues 11-62 (TRRD…DLRD) and 68-78 (DLRDHRDSRSV). Residues serine 96, serine 116, serine 126, serine 143, and serine 151 each carry the phosphoserine modification. Residues 148–173 (YRDSFDGRGPPGPESQSRAKERLKRE) form a disordered region. Positions 164 to 173 (SRAKERLKRE) are enriched in basic and acidic residues. Residue threonine 274 is modified to Phosphothreonine. An LXXLL motif motif is present at residues 345-349 (LINLL). 3 disordered regions span residues 375–428 (MRSS…PTSQ), 444–537 (VTAN…NFDN), and 560–579 (QTTA…QRHY). A Phosphoserine modification is found at serine 378. Position 379 is a phosphothreonine (threonine 379). The residue at position 381 (serine 381) is a Phosphoserine. Polar residues predominate over residues 395 to 413 (SGASLKTQPSSQPLQSGQV). Low complexity predominate over residues 446 to 457 (ANSSSASPSVAA). Positions 458 to 579 (GNTPNQNFST…APMGSYQRHY (122 aa)) are transcription activation. 2 stretches are compositionally biased toward polar residues: residues 459–485 (NTPN…NQPP) and 520–537 (SNMT…NFDN).

In terms of assembly, binds HTATIP2/TIP30. Interacts with YLPM1. Forms a complex with ILF2, ILF3, YLPM1, KHDRBS1, RBMX and PPP1CA. In terms of tissue distribution, widely expressed.

The protein resides in the nucleus. Nuclear receptor coregulator that can have both coactivator and corepressor functions. Interacts with nuclear receptors for steroids (ESR1 and ESR2) independently of the steroid binding domain (AF-2) of the ESR receptors, and with the orphan nuclear receptor NR1D2. Involved in the coactivation of nuclear steroid receptors (ER) as well as the corepression of MYC in response to 17-beta-estradiol (E2). This chain is Nuclear receptor coactivator 5 (NCOA5), found in Homo sapiens (Human).